Reading from the N-terminus, the 378-residue chain is Chaperone protein DnaJ (378 aa).

A J domain is found at 5 to 70 (DYYESLGVAK…QKRAAYDQYG (66 aa)). The CR-type zinc-finger motif lies at 133-211 (GVTKEIRIPA…CHGHGRVEKS (79 aa)). Residues Cys146, Cys149, Cys163, Cys166, Cys185, Cys188, Cys199, and Cys202 each contribute to the Zn(2+) site. CXXCXGXG motif repeat units lie at residues 146–153 (CDVCHGNG), 163–170 (CPTCHGNG), 185–192 (CPHCHGRG), and 199–206 (CVKCHGHG).

This sequence belongs to the DnaJ family. As to quaternary structure, homodimer. Zn(2+) serves as cofactor.

The protein localises to the cytoplasm. Functionally, participates actively in the response to hyperosmotic and heat shock by preventing the aggregation of stress-denatured proteins and by disaggregating proteins, also in an autonomous, DnaK-independent fashion. Unfolded proteins bind initially to DnaJ; upon interaction with the DnaJ-bound protein, DnaK hydrolyzes its bound ATP, resulting in the formation of a stable complex. GrpE releases ADP from DnaK; ATP binding to DnaK triggers the release of the substrate protein, thus completing the reaction cycle. Several rounds of ATP-dependent interactions between DnaJ, DnaK and GrpE are required for fully efficient folding. Also involved, together with DnaK and GrpE, in the DNA replication of plasmids through activation of initiation proteins. This is Chaperone protein DnaJ from Pectobacterium carotovorum subsp. carotovorum (strain PC1).